The chain runs to 204 residues: High frequency lysogenization protein HflD homolog (204 aa).

This sequence belongs to the HflD family.

Its subcellular location is the cytoplasm. The protein resides in the cell inner membrane. This is High frequency lysogenization protein HflD homolog from Shewanella amazonensis (strain ATCC BAA-1098 / SB2B).